Reading from the N-terminus, the 460-residue chain is ATP synthase subunit beta (460 aa).

Residue 150–157 participates in ATP binding; the sequence is GGAGVGKT.

The protein belongs to the ATPase alpha/beta chains family. F-type ATPases have 2 components, CF(1) - the catalytic core - and CF(0) - the membrane proton channel. CF(1) has five subunits: alpha(3), beta(3), gamma(1), delta(1), epsilon(1). CF(0) has three main subunits: a(1), b(2) and c(9-12). The alpha and beta chains form an alternating ring which encloses part of the gamma chain. CF(1) is attached to CF(0) by a central stalk formed by the gamma and epsilon chains, while a peripheral stalk is formed by the delta and b chains.

The protein resides in the cell inner membrane. The enzyme catalyses ATP + H2O + 4 H(+)(in) = ADP + phosphate + 5 H(+)(out). Functionally, produces ATP from ADP in the presence of a proton gradient across the membrane. The catalytic sites are hosted primarily by the beta subunits. The sequence is that of ATP synthase subunit beta from Salmonella gallinarum (strain 287/91 / NCTC 13346).